A 660-amino-acid chain; its full sequence is Probable serine/threonine-protein kinase CE0033 (660 aa).

Residues Tyr9–Leu278 form the Protein kinase domain. ATP is bound by residues Ile15–Val23 and Lys38. Asp136 functions as the Proton acceptor in the catalytic mechanism. Residues Arg288–Ala319 form a disordered region. PASTA domains lie at Ser377–Ser443, Gly444–Thr512, and Gly513–Asn577.

This sequence belongs to the protein kinase superfamily. Ser/Thr protein kinase family.

It catalyses the reaction L-seryl-[protein] + ATP = O-phospho-L-seryl-[protein] + ADP + H(+). It carries out the reaction L-threonyl-[protein] + ATP = O-phospho-L-threonyl-[protein] + ADP + H(+). The chain is Probable serine/threonine-protein kinase CE0033 from Corynebacterium efficiens (strain DSM 44549 / YS-314 / AJ 12310 / JCM 11189 / NBRC 100395).